Here is a 1176-residue protein sequence, read N- to C-terminus: Chromosome partition protein Smc (1176 aa).

32–39 (PNGCGKSN) is an ATP binding site. The stretch at 169–506 (GVSRYKERRR…VKLQEDVQKQ (338 aa)) forms a coiled coil. The SMC hinge domain maps to 521 to 623 (LGRLWQKLHI…TAPDLGQALA (103 aa)). 2 coiled-coil regions span residues 653-947 (DSEQ…LAAM) and 987-1024 (ERKE…LQAT).

It belongs to the SMC family. Homodimer.

The protein resides in the cytoplasm. Required for chromosome condensation and partitioning. The sequence is that of Chromosome partition protein Smc from Bordetella petrii (strain ATCC BAA-461 / DSM 12804 / CCUG 43448).